Reading from the N-terminus, the 153-residue chain is Endoribonuclease YbeY (153 aa).

Positions 119, 123, and 129 each coordinate Zn(2+).

It belongs to the endoribonuclease YbeY family. It depends on Zn(2+) as a cofactor.

The protein localises to the cytoplasm. In terms of biological role, single strand-specific metallo-endoribonuclease involved in late-stage 70S ribosome quality control and in maturation of the 3' terminus of the 16S rRNA. The chain is Endoribonuclease YbeY from Desulforamulus reducens (strain ATCC BAA-1160 / DSM 100696 / MI-1) (Desulfotomaculum reducens).